Consider the following 392-residue polypeptide: Type III polyketide synthase B (392 aa).

57-64 contributes to the CoA binding site; sequence KLTRLCKT. Catalysis depends on C166, which acts as the Nucleophile. 218–219 serves as a coordination point for substrate; the sequence is GD. Residues L269, 309–312, and A312 contribute to the CoA site; that span reads GGPA.

Belongs to the thiolase-like superfamily. Chalcone/stilbene synthases family. As to quaternary structure, homodimer. Interacts with 4CLL1/ACOS5 and TKPR1. In terms of tissue distribution, expressed in flowers and flower buds (at protein level). Mostly confined to anther tapetal cells.

Its subcellular location is the endoplasmic reticulum. The protein operates within secondary metabolite biosynthesis; flavonoid biosynthesis. Plant type III polyketide synthases (PKSs) that catalyzes the condensation of malonyl-CoA units with various CoA ester starter molecules to generate a diverse array of natural products including long-chain alkyl alpha-pyrones. Accepts up to C(20) chain-length fatty acyl CoAs as starter substrates, and carries out sequential condensations with malonyl-CoA to produce triketide and tetraketide alpha-pyrones, potential sporopollenin precursors. Favorite substrates for are midchain- and v-hydroxylated fatty acyl-CoAs (e.g. 12-hydroxyoctadecanoyl-CoA and 16-hydroxyhexadecanoyl-CoA). Required for pollen development and sporopollenin biosynthesis, the major constituent of exine in the outer pollen wall. In vitro, can use 4-coumaroyl-coenzyme A as substrate to produce bis-noryangonin and fatty acyl-coenzyme A as substrate to produce medium-chain alkyl pyrones. May play a role in both the synthesis of pollen fatty acids and phenolics found in exine. This is Type III polyketide synthase B from Arabidopsis thaliana (Mouse-ear cress).